The following is a 301-amino-acid chain: (R)-2-haloacid dehalogenase (301 aa).

This sequence belongs to the HAD-like hydrolase superfamily. S-2-haloalkanoic acid dehalogenase family. In terms of assembly, homotetramer.

It catalyses the reaction an (R)-2-haloacid + H2O = a (2S)-2-hydroxycarboxylate + a halide anion + H(+). Catalyzes the hydrolytic dehalogenation of small (R)-2-haloalkanoic acids to yield the corresponding (S)-2-hydroxyalkanoic acids. Acts on acids of short chain lengths, C(2) to C(4), with inversion of configuration at C-2. This is (R)-2-haloacid dehalogenase (hadD) from Pseudomonas putida (Arthrobacter siderocapsulatus).